The following is a 564-amino-acid chain: Hexose transporter HXT13 (564 aa).

The Cytoplasmic portion of the chain corresponds to 1-52 (MSSAQSSIDSDGDVRDADIHVAPPVEKEWSDGFDDNEVINGDNVEPPKRGLI). A helical membrane pass occupies residues 53-73 (GYLVIYLLCYPISFGGFLPGW). At 74–109 (DSGITAGFINMDNFKMNFGSYKHSTGEYYLSNVRMG) the chain is on the extracellular side. A helical transmembrane segment spans residues 110-130 (LLVAMFSIGCAIGGLIFARLA). Over 131–136 (DTLGRR) the chain is Cytoplasmic. A helical membrane pass occupies residues 137–157 (LAIVIVVLVYMVGAIIQISSN). The Extracellular portion of the chain corresponds to 158 to 167 (HKWYQYFVGK). Residues 168 to 188 (IIYGLGAGGCSVLCPMLLSEI) traverse the membrane as a helical segment. Residues 189–194 (APTDLR) are Cytoplasmic-facing. The chain crosses the membrane as a helical span at residues 195 to 215 (GGLVSLYQLNMTFGIFLGYCS). Over 216–229 (VYGTRKYDNTAQWR) the chain is Extracellular. Residues 230–250 (VPLGLCFLWALIIIIGMLLVP) form a helical membrane-spanning segment. The Cytoplasmic segment spans residues 251–333 (ESPRYLIECE…VQTFLQLTGE (83 aa)). Residues 334 to 350 (NYFFFYGTTIFKSVGLT) traverse the membrane as a helical segment. The Extracellular portion of the chain corresponds to 351 to 356 (DGFETS). A helical membrane pass occupies residues 357-374 (IVLGTVNFFSTIIAVMVV). Residues 375–381 (DKIGRRK) are Cytoplasmic-facing. A helical membrane pass occupies residues 382-402 (CLLFGAAGMMACMVIFASIGV). The Extracellular segment spans residues 403 to 424 (KCLYPHGQDGPSSKGAGNAMIV). The chain crosses the membrane as a helical span at residues 425–445 (FTCFYIFCFATTWAPVAYIVV). The Cytoplasmic portion of the chain corresponds to 446–462 (AESFPSKVKSRAMSIST). A helical membrane pass occupies residues 463-483 (ACNWLWQFLIGFFTPFITGSI). His484 is a topological domain (extracellular). Residues 485 to 505 (FYYGYVFVGCLVAMFLYVFFF) form a helical membrane-spanning segment. Topologically, residues 506 to 564 (LPETIGLSLEEIQLLYEEGIKPWKSASWVPPSRRGISSEESKTEKKDWKKFLKFSKNSD) are cytoplasmic. The segment at 530–551 (SASWVPPSRRGISSEESKTEKK) is disordered. Over residues 541–551 (ISSEESKTEKK) the composition is skewed to basic and acidic residues.

This sequence belongs to the major facilitator superfamily. Sugar transporter (TC 2.A.1.1) family.

The protein resides in the membrane. In terms of biological role, probable glucose transporter. In Saccharomyces cerevisiae (strain ATCC 204508 / S288c) (Baker's yeast), this protein is Hexose transporter HXT13 (HXT13).